Here is a 314-residue protein sequence, read N- to C-terminus: METSHNQELVATILEDNVANELQTIQDFLRWTYSILNRSDIYFGQGHDNPWDESLQLVLSSLHLPIDLPTELFNSRLTPSEKETLVQLVLTRIEQRVPVAYLTNSAWFCGHEFYVDERTIIPRSPISALIQDRFEDLISQEPNHILDLCTGSGCIAIACAYAFPNAEVDAVDLSVDALNVAEINISRHQLEHRVFPIQSNLFENILGQKYDLIVTNPPYVDEEDLADMPEEFHFEPELALGSGSDGLNITKQILKQAPDYLTENGVLVCEVGNSMISLIEQYPDVPFEWVELKNGGLGVFAIQRKDLVKYHDLF.

It belongs to the protein N5-glutamine methyltransferase family. PrmB subfamily.

The enzyme catalyses L-glutaminyl-[ribosomal protein uL3] + S-adenosyl-L-methionine = N(5)-methyl-L-glutaminyl-[ribosomal protein uL3] + S-adenosyl-L-homocysteine + H(+). In terms of biological role, methylates large ribosomal subunit protein uL3 on a specific glutamine residue. The protein is Ribosomal protein uL3 glutamine methyltransferase of Haemophilus influenzae (strain ATCC 51907 / DSM 11121 / KW20 / Rd).